The sequence spans 61 residues: Sec-independent protein translocase protein TatA (61 aa).

A helical membrane pass occupies residues methionine 1–glycine 21.

This sequence belongs to the TatA/E family. As to quaternary structure, the Tat system comprises two distinct complexes: a TatABC complex, containing multiple copies of TatA, TatB and TatC subunits, and a separate TatA complex, containing only TatA subunits. Substrates initially bind to the TatABC complex, which probably triggers association of the separate TatA complex to form the active translocon.

The protein localises to the cell inner membrane. Functionally, part of the twin-arginine translocation (Tat) system that transports large folded proteins containing a characteristic twin-arginine motif in their signal peptide across membranes. TatA could form the protein-conducting channel of the Tat system. The chain is Sec-independent protein translocase protein TatA from Maridesulfovibrio salexigens (strain ATCC 14822 / DSM 2638 / NCIMB 8403 / VKM B-1763) (Desulfovibrio salexigens).